The primary structure comprises 1966 residues: Histone-lysine N-methyltransferase SETD1B (1966 aa).

Residues 1–12 (MENSHPPHHHHQ) are compositionally biased toward basic residues. A disordered region spans residues 1–26 (MENSHPPHHHHQQPPPQPGPSGERRN). An interaction with WDR82 region spans residues 68-98 (VEDPRVVGIWTKNKELELSVPKFKIDEFYVG). Residues 93–181 (DEFYVGPVPP…NIIHVELDTK (89 aa)) form the RRM domain. Disordered regions lie at residues 235–302 (GCGS…LFSQ), 357–660 (VGGT…PKPM), 675–719 (LAPT…PPPA), 963–1462 (KVKR…SGPL), 1501–1541 (PPLL…RPPA), 1555–1606 (QPQT…KLPF), and 1636–1668 (AKSR…PQPL). Composition is skewed to polar residues over residues 243–259 (VTPN…TAYS), 265–274 (TPNSYGQGTP), and 282–300 (PFSQ…SYLF). Composition is skewed to pro residues over residues 432–441 (PAPPPLPPAE) and 449–458 (GTPPGPPPPD). Over residues 493-521 (EKPHDSLDSRIEMLLKEQRTKLLFLREPD) the composition is skewed to basic and acidic residues. Over residues 531 to 543 (SPISSSSSQLSPL) the composition is skewed to low complexity. The segment covering 592 to 603 (PRPPPEPGPPDP) has biased composition (pro residues). Over residues 637-646 (EDMEISDDEM) the composition is skewed to acidic residues. Residues 679–719 (LPLPPPPGFPPLPPPPPPPPPQPGFPMPPPLPPPPPPPPPA) are compositionally biased toward pro residues. 2 positions are modified to phosphoserine: Ser986 and Ser994. Positions 995–1015 (ERERDRDMADTPCELAKRDPK) are enriched in basic and acidic residues. At Ser1031 the chain carries Phosphoserine. The span at 1041 to 1064 (LSASSSSSASSSSGSSTTSPSSSA) shows a compositional bias: low complexity. Acidic residues-rich tracts occupy residues 1067-1087 (KEEE…EEEE) and 1104-1142 (KDDD…EEET). Residues 1148-1174 (SKAEATSSSESSESSEFESSSESSPSS) are compositionally biased toward low complexity. The stretch at 1173–1204 (SSSEDEEEVVAREEEEEEEEEEMVAEESMASA) forms a coiled coil. Composition is skewed to acidic residues over residues 1175–1197 (SEDE…EMVA) and 1229–1238 (GMEEEVDIET). Phosphoserine occurs at positions 1265, 1283, and 1335. The segment covering 1312-1340 (EPPMMLPLPLQPPLPPPRPPRPPSPPPEP) has biased composition (pro residues). The segment covering 1383 to 1425 (PGGEPPLSGGSSGLSLSSPQVPGSPFSYPAPSPSLSSGGLPRT) has biased composition (low complexity). A compositionally biased stretch (pro residues) spans 1501 to 1514 (PPLLPAPLASCPPP). Positions 1515 to 1524 (MKRKPGRPRR) are enriched in basic residues. Over residues 1580 to 1600 (PAPPPPLPPQPPPPPPPPPVE) the composition is skewed to pro residues. A phosphoserine mark is found at Ser1659 and Ser1663. Residues 1745–1750 (GCARSE) carry the WDR5 interaction motif (WIN) motif. The interval 1767–1800 (SRASTDEPPADTQGMSIPAQPHASTRAGSERRSE) is disordered. A RxxxRR motif motif is present at residues 1798-1803 (RSEQRR). An SET domain is found at 1827–1944 (KKLKFCKSHI…VNEEITYDYK (118 aa)). Tyr1943 lines the S-adenosyl-L-methionine pocket. In terms of domain architecture, Post-SET spans 1950–1966 (VKIPCLCGSENCRGTLN).

It belongs to the class V-like SAM-binding methyltransferase superfamily. As to quaternary structure, component of the SET1B/COMPASS complex composed of the catalytic subunit SETD1B, WDR5, WDR82, RBBP5, ASH2L/ASH2, CXXC1/CFP1, HCFC1, DPY30 homotrimer and BOD1. Forms a core complex with the evolutionary conserved subcomplex WRAD composed of WDR5, RBBP5, ASH2L/ASH2 and DPY30 subunits; WRAD differentially stimulates the methyltransferase activity. Interacts with HCFC1 and ASH2L/ASH2. Interacts (via N-terminal region) with WDR82. Interacts (via the RRM domain) with hyperphosphorylated C-terminal domain (CTD) of RNA polymerase II large subunit (POLR2A) only in the presence of WDR82. Binds specifically to CTD heptad repeats phosphorylated on 'Ser-5' of each heptad. Interacts with RBM15. Interacts (via WIN motif) with WDR5.

Its subcellular location is the nucleus. It localises to the nucleus speckle. The protein resides in the chromosome. The protein localises to the cytoplasm. The catalysed reaction is L-lysyl(4)-[histone H3] + S-adenosyl-L-methionine = N(6)-methyl-L-lysyl(4)-[histone H3] + S-adenosyl-L-homocysteine + H(+). The enzyme catalyses N(6)-methyl-L-lysyl(4)-[histone H3] + S-adenosyl-L-methionine = N(6),N(6)-dimethyl-L-lysyl(4)-[histone H3] + S-adenosyl-L-homocysteine + H(+). It catalyses the reaction N(6),N(6)-dimethyl-L-lysyl(4)-[histone H3] + S-adenosyl-L-methionine = N(6),N(6),N(6)-trimethyl-L-lysyl(4)-[histone H3] + S-adenosyl-L-homocysteine + H(+). Histone methyltransferase that catalyzes methyl group transfer from S-adenosyl-L-methionine to the epsilon-amino group of 'Lys-4' of histone H3 (H3K4) via a non-processive mechanism. Part of chromatin remodeling machinery, forms H3K4me1, H3K4me2 and H3K4me3 methylation marks at active chromatin sites where transcription and DNA repair take place. Plays an essential role in regulating the transcriptional programming of multipotent hematopoietic progenitor cells and lymphoid lineage specification during hematopoiesis. The polypeptide is Histone-lysine N-methyltransferase SETD1B (SETD1B) (Homo sapiens (Human)).